A 130-amino-acid polypeptide reads, in one-letter code: Prefoldin subunit alpha (130 aa).

The protein belongs to the prefoldin subunit alpha family. As to quaternary structure, heterohexamer of two alpha and four beta subunits.

The protein resides in the cytoplasm. Functionally, molecular chaperone capable of stabilizing a range of proteins. Seems to fulfill an ATP-independent, HSP70-like function in archaeal de novo protein folding. In Thermoplasma acidophilum (strain ATCC 25905 / DSM 1728 / JCM 9062 / NBRC 15155 / AMRC-C165), this protein is Prefoldin subunit alpha (pfdA).